The chain runs to 336 residues: Alpha-glucoside transport system permease protein AglF (336 aa).

The next 8 membrane-spanning stretches (helical) occupy residues 4-24 (LIAAILTMVAGVLVCAAYFWS), 55-75 (PWLFLAPALLALTLYLVYPVV), 113-133 (FLWLLVVPALSTFFGLIIAAL), 146-166 (LIFMPMAISFVGAAVIWKFIY), 176-196 (IGLLNAIVVALGGEPQAWITL), 202-222 (FFLMVILIWIQTGFAMVILSA), 258-278 (IAVVWTTITILVLKVFDIVLA), and 304-324 (FGRGAAIAVVIMILVVPIMIW). Residues 109–325 (IFNNFLWLLV…ILVVPIMIWN (217 aa)) enclose the ABC transmembrane type-1 domain.

It belongs to the binding-protein-dependent transport system permease family. MalFG subfamily.

The protein localises to the cell inner membrane. In terms of biological role, part of the binding-protein-dependent transport system for alpha-glucosides such as sucrose, maltose and trehalose. Probably responsible for the translocation of the substrate across the membrane. This is Alpha-glucoside transport system permease protein AglF (aglF) from Rhizobium meliloti (strain 1021) (Ensifer meliloti).